We begin with the raw amino-acid sequence, 954 residues long: E3 ubiquitin-protein ligase MIB2 (954 aa).

One can recognise an MIB/HERC2 1 domain in the interval 1 to 80 (MDLDPYASMQ…AYDLLLYDNA (80 aa)). The segment at 86-138 (HPNIICDCCKKHGIRGMRWKCKMCFDYDLCTQCYMNNKHDLSHAFERYETAHS) adopts a ZZ-type zinc-finger fold. Zn(2+) is bound by residues Cys91, Cys94, Cys106, Cys109, Cys115, Cys118, His124, and His128. Positions 149 to 227 (LTRITLKGTF…KVDLKCTVEA (79 aa)) constitute an MIB/HERC2 2 domain. ANK repeat units follow at residues 464–493 (QGRT…TVNL), 497–526 (EGDT…GADL), 530–559 (AKCT…DVNL), 563–591 (HGDT…NIDF), 597–626 (QGFN…QLVD), 631–661 (DGFT…DVNV), 665–694 (RNQT…DVNA), 698–726 (DGDT…EMGS), and 766–795 (RGKS…EQQV). 2 consecutive RING-type zinc fingers follow at residues 830–865 (CLVC…IKCQ) and 910–943 (CPIC…PICR).

The protein resides in the cytoplasm. The catalysed reaction is S-ubiquitinyl-[E2 ubiquitin-conjugating enzyme]-L-cysteine + [acceptor protein]-L-lysine = [E2 ubiquitin-conjugating enzyme]-L-cysteine + N(6)-ubiquitinyl-[acceptor protein]-L-lysine.. The protein operates within protein modification; protein ubiquitination. In terms of biological role, E3 ubiquitin-protein ligase that mediates ubiquitination of Delta receptors, which act as ligands of Notch proteins. Positively regulates the Delta-mediated Notch signaling by ubiquitinating the intracellular domain of Delta, leading to endocytosis of Delta receptors. In Gallus gallus (Chicken), this protein is E3 ubiquitin-protein ligase MIB2 (MIB2).